The sequence spans 255 residues: Large ribosomal subunit protein eL8 (255 aa).

The segment covering 1–16 (MPKAPKKITKPKKAEK) has biased composition (basic residues). The segment at 1 to 28 (MPKAPKKITKPKKAEKKKNPLFQAKPRS) is disordered.

The protein belongs to the eukaryotic ribosomal protein eL8 family.

This is Large ribosomal subunit protein eL8 (RPL7A) from Tetrahymena thermophila.